The following is a 433-amino-acid chain: Type I acyl-CoA thioesterase mpaH' (433 aa).

Residues 58–246 (HGVGLPKELY…IKALFGTTAD (189 aa)) form an abhydrolase domain region. V60 contributes to the substrate binding site. Residue S139 is the Nucleophile of the active site. Position 140 (F140) interacts with substrate. Active-site residues include D163 and H365.

Belongs to the AB hydrolase superfamily. MpaH hydrolase family. Homodimer.

It is found in the peroxisome matrix. It carries out the reaction mycophenolyl-CoA + H2O = mycophenolate + CoA + H(+). It participates in secondary metabolite biosynthesis; terpenoid biosynthesis. In terms of biological role, type I acyl-CoA thioesterase; part of the gene cluster that mediates the biosynthesis of mycophenolic acid (MPA), the first isolated antibiotic natural product in the world obtained from a culture of Penicillium brevicompactum in 1893. MpaH' acts as a peroxisomal acyl-CoA hydrolase that converts MPA-CoA into the final product MPA. The first step of the pathway is the synthesis of 5-methylorsellinic acid (5MOA) by the cytosolic polyketide synthase mpaC. 5MOA is then converted to the phthalide compound 5,7-dihydroxy-4,6-dimethylphthalide (DHMP) by the endoplasmic reticulum-bound cytochrome P450 monooxygenase mpaDE. MpaDE first catalyzes hydroxylation of 5-MOA to 4,6-dihydroxy-2-(hydroxymethyl)-3-methylbenzoic acid (DHMB). MpaDE then acts as a lactone synthase that catalyzes the ring closure to convert DHMB into DHMP. The next step is the prenylation of DHMP by the Golgi apparatus-associated prenyltransferase mpaA to yield farnesyl-DHMP (FDHMP). The ER-bound oxygenase mpaB then mediates the oxidative cleavage the C19-C20 double bond in FDHMP to yield FDHMP-3C via a mycophenolic aldehyde intermediate. The O-methyltransferase mpaG catalyzes the methylation of FDHMP-3C to yield MFDHMP-3C. After the cytosolic methylation of FDHMP-3C, MFDHMP-3C enters into peroxisomes probably via free diffusion due to its low molecular weight. Upon a peroxisomal CoA ligation reaction, catalyzed by a beta-oxidation component enzyme acyl-CoA ligase ACL891, MFDHMP-3C-CoA would then be restricted to peroxisomes for the following beta-oxidation pathway steps. The peroxisomal beta-oxidation machinery than converts MFDHMP-3C-CoA into MPA_CoA, via a beta-oxidation chain-shortening process. Finally mpaH acts as a peroxisomal acyl-CoA hydrolase with high substrate specificity toward MPA-CoA to release the final product MPA. In Penicillium brevicompactum, this protein is Type I acyl-CoA thioesterase mpaH'.